The chain runs to 335 residues: Ubiquinone biosynthesis protein COQ4, mitochondrial (335 aa).

A mitochondrion-targeting transit peptide spans 1 to 10 (MLRLSLLRST). Zn(2+) is bound by residues His210, Asp211, His214, and Glu226.

It belongs to the COQ4 family. As to quaternary structure, component of a multi-subunit COQ enzyme complex, composed of at least COQ3, COQ4, COQ5, COQ6, COQ7 and COQ9. Interacts with COQ3. Zn(2+) is required as a cofactor.

It localises to the mitochondrion inner membrane. The enzyme catalyses 4-hydroxy-3-methoxy-5-(all-trans-hexaprenyl)benzoate + H(+) = 2-methoxy-6-(all-trans-hexaprenyl)phenol + CO2. The protein operates within cofactor biosynthesis; ubiquinone biosynthesis. Its function is as follows. Lyase that catalyzes the C1-decarboxylation of 4-hydroxy-3-methoxy-5-(all-trans-hexaprenyl)benzoic acid into 2-methoxy-6-(all-trans-hexaprenyl)phenol during ubiquinone biosynthesis. May play a role in organizing a multi-subunit COQ enzyme complex required for coenzyme Q biosynthesis. Required for steady-state levels of COQ3, COQ4, COQ6, COQ7 and COQ9 polypeptides. This is Ubiquinone biosynthesis protein COQ4, mitochondrial from Saccharomyces cerevisiae (strain ATCC 204508 / S288c) (Baker's yeast).